Reading from the N-terminus, the 326-residue chain is GTPase Obg (326 aa).

The Obg domain maps to 1–159 (MKFVDSAKIY…LEIELELKLM (159 aa)). The interval 119 to 138 (EGGKGGKGNPHFASSTRQAP) is disordered. In terms of domain architecture, OBG-type G spans 160–323 (ADVGLVGFPN…LKDELWSRVK (164 aa)). Residues 166–173 (GFPNAGKS), 191–195 (FTTLV), 213–216 (DIPG), 280–283 (TKMD), and 304–306 (SSV) each bind GTP. The Mg(2+) site is built by serine 173 and threonine 193.

This sequence belongs to the TRAFAC class OBG-HflX-like GTPase superfamily. OBG GTPase family. In terms of assembly, monomer. Mg(2+) serves as cofactor.

It is found in the cytoplasm. An essential GTPase which binds GTP, GDP and possibly (p)ppGpp with moderate affinity, with high nucleotide exchange rates and a fairly low GTP hydrolysis rate. Plays a role in control of the cell cycle, stress response, ribosome biogenesis and in those bacteria that undergo differentiation, in morphogenesis control. This chain is GTPase Obg, found in Chlorobium phaeobacteroides (strain BS1).